The primary structure comprises 508 residues: Probable malate:quinone oxidoreductase (508 aa).

It belongs to the MQO family. FAD serves as cofactor.

The enzyme catalyses (S)-malate + a quinone = a quinol + oxaloacetate. The protein operates within carbohydrate metabolism; tricarboxylic acid cycle; oxaloacetate from (S)-malate (quinone route): step 1/1. The sequence is that of Probable malate:quinone oxidoreductase from Chromohalobacter salexigens (strain ATCC BAA-138 / DSM 3043 / CIP 106854 / NCIMB 13768 / 1H11).